We begin with the raw amino-acid sequence, 397 residues long: Serpin B10 (397 aa).

The Nuclear localization signal motif lies at 74–77 (KKRK).

The protein belongs to the serpin family. Ov-serpin subfamily.

The protein resides in the nucleus. Its subcellular location is the cytoplasm. Functionally, protease inhibitor that may play a role in the regulation of protease activities during hematopoiesis and apoptosis induced by TNF. May regulate protease activities in the cytoplasm and in the nucleus. The sequence is that of Serpin B10 (SERPINB10) from Otolemur garnettii (Small-eared galago).